The following is a 47-amino-acid chain: Putative protein PinH (47 aa).

One can recognise a Resolvase/invertase-type recombinase catalytic domain in the interval Met1–Val47.

Belongs to the site-specific recombinase resolvase family.

In Escherichia coli (strain K12), this protein is Putative protein PinH (pinH).